Reading from the N-terminus, the 572-residue chain is Sialate:O-sulfotransferase 1 (572 aa).

At 1 to 14 (MAKPFFRLQKFLRR) the chain is on the cytoplasmic side. A helical; Signal-anchor for type II membrane protein membrane pass occupies residues 15-35 (TQFLLLFLTAAYLMTGSLLLL). The Extracellular portion of the chain corresponds to 36 to 572 (QRARVALPQA…AGLPREYVPR (537 aa)). N-linked (GlcNAc...) asparagine glycosylation occurs at Asn105. WSC domains are found at residues 139-231 (RGNY…YSVG) and 242-337 (TATY…DTRC). The N-linked (GlcNAc...) asparagine glycan is linked to Asn254.

This sequence belongs to the WSCD family.

It localises to the golgi apparatus membrane. The enzyme catalyses a ganglioside GM1b + 3'-phosphoadenylyl sulfate = an 8-O-sulfo-ganglioside GM1b + adenosine 3',5'-bisphosphate + H(+). In terms of biological role, sialate:O-sulfotransferase which catalyzes 8-O-sulfation at the Sia-glycan level using 3'-phosphoadenosine 5'-phosphosulfate (PAPS) as a donor, forming 8-O-sulfated Sia (Sia8S)-glycans. Displays selectivity toward glycolipids such as GM1 gangliosides. The polypeptide is Sialate:O-sulfotransferase 1 (Wscd1) (Mus musculus (Mouse)).